Here is a 115-residue protein sequence, read N- to C-terminus: Ribonuclease P protein component (115 aa).

It belongs to the RnpA family. As to quaternary structure, consists of a catalytic RNA component (M1 or rnpB) and a protein subunit.

The catalysed reaction is Endonucleolytic cleavage of RNA, removing 5'-extranucleotides from tRNA precursor.. Its function is as follows. RNaseP catalyzes the removal of the 5'-leader sequence from pre-tRNA to produce the mature 5'-terminus. It can also cleave other RNA substrates such as 4.5S RNA. The protein component plays an auxiliary but essential role in vivo by binding to the 5'-leader sequence and broadening the substrate specificity of the ribozyme. The polypeptide is Ribonuclease P protein component (Buchnera aphidicola subsp. Acyrthosiphon pisum (strain APS) (Acyrthosiphon pisum symbiotic bacterium)).